Here is a 225-residue protein sequence, read N- to C-terminus: Single-pass membrane and coiled-coil domain-containing protein 3 (225 aa).

Residues 69 to 92 adopt a coiled-coil conformation; that stretch reads IIQAMTKIQKELQKIDEALKDQLE. A helical membrane pass occupies residues 155 to 175; it reads IGTSLLGSIGVAVLSLGIDMI. Residues 182–209 adopt a coiled-coil conformation; it reads AVERTQLQAAIKSYEKHLEEFKAASAKY.

The protein localises to the membrane. In Mus musculus (Mouse), this protein is Single-pass membrane and coiled-coil domain-containing protein 3 (Smco3).